A 415-amino-acid chain; its full sequence is Phosphoglycerate kinase (415 aa).

Substrate contacts are provided by residues 28 to 30 (DLN), R44, 67 to 70 (HQGR), R124, and R164. ATP is bound by residues E336 and 362–365 (GGHF).

Belongs to the phosphoglycerate kinase family.

It localises to the cytoplasm. The enzyme catalyses (2R)-3-phosphoglycerate + ATP = (2R)-3-phospho-glyceroyl phosphate + ADP. The protein operates within carbohydrate degradation; glycolysis; pyruvate from D-glyceraldehyde 3-phosphate: step 2/5. In Aeropyrum pernix (strain ATCC 700893 / DSM 11879 / JCM 9820 / NBRC 100138 / K1), this protein is Phosphoglycerate kinase (pgk).